Consider the following 202-residue polypeptide: Probable adenylyl-sulfate kinase (202 aa).

An ATP-binding site is contributed by 36–43 (GLSGSGKS). Ser110 (phosphoserine intermediate) is an active-site residue.

This sequence belongs to the APS kinase family.

It carries out the reaction adenosine 5'-phosphosulfate + ATP = 3'-phosphoadenylyl sulfate + ADP + H(+). It participates in sulfur metabolism; hydrogen sulfide biosynthesis; sulfite from sulfate: step 2/3. In terms of biological role, catalyzes the synthesis of activated sulfate. The protein is Probable adenylyl-sulfate kinase of Halalkalibacterium halodurans (strain ATCC BAA-125 / DSM 18197 / FERM 7344 / JCM 9153 / C-125) (Bacillus halodurans).